The sequence spans 778 residues: Endonuclease MutS2 (778 aa).

328 to 335 (GPNTGGKT) is a binding site for ATP. Residues 702 to 777 (LDLRGKRYEE…GSGATIVTFK (76 aa)) form the Smr domain.

This sequence belongs to the DNA mismatch repair MutS family. MutS2 subfamily. In terms of assembly, homodimer. Binds to stalled ribosomes, contacting rRNA.

In terms of biological role, endonuclease that is involved in the suppression of homologous recombination and thus may have a key role in the control of bacterial genetic diversity. Functionally, acts as a ribosome collision sensor, splitting the ribosome into its 2 subunits. Detects stalled/collided 70S ribosomes which it binds and splits by an ATP-hydrolysis driven conformational change. Acts upstream of the ribosome quality control system (RQC), a ribosome-associated complex that mediates the extraction of incompletely synthesized nascent chains from stalled ribosomes and their subsequent degradation. Probably generates substrates for RQC. This Streptococcus pneumoniae (strain CGSP14) protein is Endonuclease MutS2.